Reading from the N-terminus, the 326-residue chain is JNK1/MAPK8-associated membrane protein homolog (326 aa).

Residues 1 to 71 (MSSLSGHAST…CESCDTPLQP (71 aa)) are Lumenal-facing. Asparagine 27 carries N-linked (GlcNAc...) asparagine glycosylation. Residues 72–92 (YDWMYLLFIALLPLLLHMQFI) traverse the membrane as a helical segment. Topologically, residues 93 to 108 (RIARKYCRTRYYEVSE) are cytoplasmic. The chain crosses the membrane as a helical span at residues 109 to 129 (YLCVILENVIACVIAVLIYPP). The Lumenal portion of the chain corresponds to 130 to 166 (RFTFFLNGCSKTDIKEWYPACYNPRIGYTKTMRCTYE). A helical transmembrane segment spans residues 167–187 (VVFPLYSITFIHHLILIGSIL). Residues 188–208 (VLRSTLYCVLLYKTYNGKPFY) lie on the Cytoplasmic side of the membrane. Helical transmembrane passes span 209-229 (AAIV…GVVF) and 230-250 (YTFP…HLAL). Residues 251–269 (EGKRPLKEMIVRIATSPTH) are Cytoplasmic-facing. A helical membrane pass occupies residues 270-290 (LIFLSITMLMLSFGVIAIIAP). The Lumenal segment spans residues 291-296 (LDIPYR). Residues 297-317 (WSFLCIVPVPFIFYMATIPFS) traverse the membrane as a helical segment. The Cytoplasmic portion of the chain corresponds to 318–326 (NPTTTMRLS).

The protein localises to the endoplasmic reticulum membrane. Its function is as follows. Facilitates degradation of misfolded endoplasmic reticulum (ER) proteins through the recruitment of components of the proteasome and endoplasmic reticulum-associated degradation (ERAD) system. Involved in ER stress response. The protein is JNK1/MAPK8-associated membrane protein homolog of Caenorhabditis elegans.